We begin with the raw amino-acid sequence, 257 residues long: Exosome complex component Rrp4 (257 aa).

Residues 65-137 (GDNVLGKIVD…EVNQIDLTTK (73 aa)) enclose the S1 motif domain. Residues 147 to 206 (RGGQLVTITPSKVPRLIGKGGSMINMIKTLTGTRIIVGQNGWVWVSGKNDELERLAIEAI) enclose the KH domain.

This sequence belongs to the RRP4 family. In terms of assembly, component of the archaeal exosome complex. Forms a trimer of Rrp4 and/or Csl4 subunits. The trimer associates with a hexameric ring-like arrangement composed of 3 Rrp41-Rrp42 heterodimers.

It is found in the cytoplasm. In terms of biological role, non-catalytic component of the exosome, which is a complex involved in RNA degradation. Increases the RNA binding and the efficiency of RNA degradation. Confers strong poly(A) specificity to the exosome. This Thermococcus kodakarensis (strain ATCC BAA-918 / JCM 12380 / KOD1) (Pyrococcus kodakaraensis (strain KOD1)) protein is Exosome complex component Rrp4.